Reading from the N-terminus, the 584-residue chain is Eukaryotic translation initiation factor 2D (584 aa).

Met1 is subject to N-acetylmethionine. In terms of domain architecture, PUA spans 93-173 (LPTFTTWPLV…RGFSVLHTYQ (81 aa)). The segment at 223–257 (EEENGEVHQAREDKSLSEAPEDTSTRGLNQDSTDS) is disordered. The span at 227-238 (GEVHQAREDKSL) shows a compositional bias: basic and acidic residues. A phosphoserine mark is found at Ser237, Ser254, and Ser361. Polar residues predominate over residues 247–257 (TRGLNQDSTDS). The SWIB/MDM2 domain maps to 383–467 (PLYCVPASMT…DSLLTRCLEK (85 aa)). In terms of domain architecture, SUI1 spans 491 to 564 (IDITLAQRAS…HLGWLLLEEY (74 aa)).

The protein belongs to the eIF2D family.

It is found in the cytoplasm. Translation initiation factor that is able to deliver tRNA to the P-site of the eukaryotic ribosome in a GTP-independent manner. The binding of Met-tRNA(I) occurs after the AUG codon finds its position in the P-site of 40S ribosomes, the situation that takes place during initiation complex formation on some specific RNAs. Its activity in tRNA binding with 40S subunits does not require the presence of the aminoacyl moiety. Possesses the unique ability to deliver non-Met (elongator) tRNAs into the P-site of the 40S subunit. In addition to its role in initiation, can promote release of deacylated tRNA and mRNA from recycled 40S subunits following ABCE1-mediated dissociation of post-termination ribosomal complexes into subunits. This is Eukaryotic translation initiation factor 2D (EIF2D) from Homo sapiens (Human).